The chain runs to 274 residues: RsbT co-antagonist protein RsbRA (274 aa).

In terms of domain architecture, STAS spans 150–265; sequence SAPLIPVFEN…KGIQTALEMT (116 aa). A phosphothreonine mark is found at Thr171 and Thr205.

Interacts with RsbRB and RsbS in the stressosome. The stressosome probably also contains RsbRC and RsbRD. In terms of processing, phosphorylated by RsbT. This threonine phosphorylation abrogates the ability of RsbRA to stimulate RsbT in vitro.

Its function is as follows. Acts as a positive regulator of sigma-B activity in response to salt and heat stress by stimulating the activity of the RsbT kinase toward RsbS in vitro. One of 4 functionally non-identical RsbR paralogs, it functions in the environmental signaling branch of the general stress response. Functionally, negative regulator of sigma-B activity. Non-phosphorylated RsbS binds to RsbT, preventing its association with RsbU. Requires any one of RsbRA, RsbRB, RsbRC or RsbRD to sequester RsbT. When RsbS and the RsbR paralog(s) are phosphorylated, they release RsbT, which can then bind and activate RsbU. The protein is RsbT co-antagonist protein RsbRA (rsbRA) of Bacillus subtilis (strain 168).